Consider the following 361-residue polypeptide: Septin-2 (361 aa).

A Phosphotyrosine modification is found at Y17. The region spanning 34–306 is the Septin-type G domain; it reads KGFEFTLMVV…ENFRSERLKR (273 aa). Positions 44 to 51 are G1 motif; that stretch reads GESGLGKS. Residues 44 to 52, T78, G104, and 183 to 186 contribute to the GTP site; these read GESGLGKST and KADT. Positions 101 to 104 are G3 motif; that stretch reads DTPG. The interval 182-185 is G4 motif; it reads AKAD. The residue at position 190 (K190) is an N6-acetyllysine. Y211 carries the phosphotyrosine modification. S218 bears the Phosphoserine mark. Positions 241, 256, and 258 each coordinate GTP. The tract at residues 260 to 270 is important for dimerization; that stretch reads WGVVEVENPEH.

This sequence belongs to the TRAFAC class TrmE-Era-EngA-EngB-Septin-like GTPase superfamily. Septin GTPase family. In terms of assembly, septins polymerize into heterooligomeric protein complexes that form filaments, and associate with cellular membranes, actin filaments and microtubules. GTPase activity is required for filament formation. Septin filaments are assembled from asymmetrical heterotrimers, composed of SEPTIN2, SEPTIN6 and SEPTIN7 that associate head-to-head to form a hexameric unit. Interaction between SEPTIN2 and SEPTIN7 seems indirect. Also interacts with SEPTIN9 and SEPTIN5. Interaction with SEPTIN4 not detected. Component of a septin core octameric complex consisting of SEPTIN12, SEPTIN7, SEPTIN6 and SEPTIN2 or SEPTIN4 in the order 12-7-6-2-2-6-7-12 or 12-7-6-4-4-6-7-12 and located in the sperm annulus. Interacts with MAP4. Interacts with DZIP1L. In terms of tissue distribution, widely expressed.

Its subcellular location is the cytoplasm. It is found in the cytoskeleton. The protein localises to the spindle. The protein resides in the chromosome. It localises to the centromere. Its subcellular location is the kinetochore. It is found in the cleavage furrow. The protein localises to the midbody. The protein resides in the cell cortex. It localises to the cell projection. Its subcellular location is the cilium membrane. It is found in the cilium. The protein localises to the flagellum. Its function is as follows. Filament-forming cytoskeletal GTPase. Forms a filamentous structure with SEPTIN12, SEPTIN6, SEPTIN2 and probably SEPTIN4 at the sperm annulus which is required for the structural integrity and motility of the sperm tail during postmeiotic differentiation. Required for normal organization of the actin cytoskeleton. Plays a role in the biogenesis of polarized columnar-shaped epithelium by maintaining polyglutamylated microtubules, thus facilitating efficient vesicle transport, and by impeding MAP4 binding to tubulin. Required for the progression through mitosis. Forms a scaffold at the midplane of the mitotic splindle required to maintain CENPE localization at kinetochores and consequently chromosome congression. During anaphase, may be required for chromosome segregation and spindle elongation. Plays a role in ciliogenesis and collective cell movements. In cilia, required for the integrity of the diffusion barrier at the base of the primary cilium that prevents diffusion of transmembrane proteins between the cilia and plasma membranes: probably acts by regulating the assembly of the tectonic-like complex (also named B9 complex) by localizing TMEM231 protein. The chain is Septin-2 from Mus musculus (Mouse).